A 1334-amino-acid polypeptide reads, in one-letter code: MFSLISLSHEESAESANKYVWRVSLWVESERQTPPSEVFLPFFRVEYMKVRKVSIVVLVLTLFIIPVIIPPAHSSINTSTTYATAYVGETSISSEPFILDVANLPWLNPQGSNIRFFEYSNLTGQLYAYEQLFSKTTWTVNTVESTGWETLPYWQNGQLVFNCPSAPHGGQYIAWRYTPSSNTFNVTIHITSWPSGINNPYSPGIAIYSPTVGDQPTDIGTSGFLALLVTFNGQIWYHETNGNWVELSVVYPTPSTAYPFTFTVTFTENSAGNVTVSTVYINSTAYTVNVNTPFPWSQIGYVGIRGDIDNLFYVSYFAVSPSPFVNSVESTDWKTLPYWQNGELVINGTGASAGGQYIAWRFTPSSNTFNVTIHITSWPSGISGGTYPGIEIFSPNVGNQPYAQASGFLALLVTFNGNIWYHGISGISGCDLLKSSAYPTPSTAYPFTFTVTFTENSAGNVTVSTVYINSTAHTVNLNTPFPWSQIGYIGITSCYDLFYVSYFAVSPSPFVNSVESTDWKTLPYWQNGQLVFNVTGASGSQYIAWRYTPVGNTINVTIHITSFPSGIPSGDNPGIEIFSPNVGDQPYDEVSGFLSLLVAFNGNIWYHGLNGFVLLKSSAFPTPSTAYPFTFTVTFTENSAGNVTVSTVYINSTAYTLNFNTPFPWSQIGYIGIRGDPSNLFYVSYFSTTQQLYAYELVTNPYTNTPYTGTVYMAIFPYPISYDVYVSQAPIVYSQATLPLVTVSSPSQVTTQYPIISTSTYMVIPSIGAYSGNTPLFLYPQMAVSEGIVPVIPMVESTSWKTLPYWQNGQLVLDVAAACSSQYVAWRYTPSSNTMNVTIHITSYPSGIQYNPGISIYSPNIGDQPYDYASGFLALLVTFSGNIWYHGTNANWVELRSSAYPTPSTAYPFTFTVTFTENSAGNVTISTVYINSTAYTLNVNTPFPWSQIGYVAIRVDTQNLFYVSYFSISQGSSPFVLVSPSYAQGFVGSQYAYPYFMNTTTVLVNNTAVPKGLSVFSGYMPGANTVFSTFLYMNTTPQSPVLVLMPAPYVSFNALSNGFSITADAQILSLYGYPATYTNPSFTYTPPGIIGMSGTNTFTFKGAQTQLSASTTPPSSTTPTPPSSSSSSSSSSSISTSPNTIQVVLNGSVYVHVPLLFHPALSTPNGSVLFSTSVNSTGVYISSYVTSAITTPLNVTIEYTNGTVIKSFTIEPGQTFQVPLVNGDENVIISYGNHTVTIPISANNVNVLSLRNAISAVLPPIYALPLFLLFAGSFFISLAVRSVPKFAGMGSIIYIFFVAPFLIVIGIPTSVVYGTVVGALIIIIIGLWASRSQD.

The helical transmembrane segment at 53–73 (VSIVVLVLTLFIIPVIIPPAH) threads the bilayer. Residues 1107–1135 (LSASTTPPSSTTPTPPSSSSSSSSSSSIS) form a disordered region. A compositionally biased stretch (low complexity) spans 1110-1135 (STTPPSSTTPTPPSSSSSSSSSSSIS). Helical transmembrane passes span 1256 to 1276 (AVLPPIYALPLFLLFAGSFFI), 1292 to 1312 (IIYIFFVAPFLIVIGIPTSVV), and 1313 to 1333 (YGTVVGALIIIIIGLWASRSQ).

It localises to the host membrane. The chain is Putative transmembrane protein ORF1334 from Acidianus two-tailed virus (ATV).